A 150-amino-acid chain; its full sequence is Transcriptional repressor NrdR (150 aa).

Residues 3–33 fold into a zinc finger; that stretch reads CPFCGGESRVLESRPASDEEAVRRRRECLAC. Positions 48–138 constitute an ATP-cone domain; sequence LIVVKKDGRR…VYREFKDLNE (91 aa).

This sequence belongs to the NrdR family. Zn(2+) is required as a cofactor.

Negatively regulates transcription of bacterial ribonucleotide reductase nrd genes and operons by binding to NrdR-boxes. In Symbiobacterium thermophilum (strain DSM 24528 / JCM 14929 / IAM 14863 / T), this protein is Transcriptional repressor NrdR.